Here is a 259-residue protein sequence, read N- to C-terminus: MTDTSVQSNTALDNDTTHFGFTTVAKDEKVTKVAEVFHSVAAKYDIMNDLMSGGVHRLWKRFTIDCSGARPGQRVLDLGGGTGDLTAKFSRIVGDQGHVILADINNSMLNVGRDKLRDNGIVGNVHYVQANAEELPFPDDYFDVITISFCLRNVTDKDKALRSMFRVLKPGGRLLVLEFSKPILDPLSKVYDAYSFHLLPKMGELVANDADSYRYLAESIRMHPDQATLEGMMKEAGFENTKYYNLTGGIVALHRGYKF.

S-adenosyl-L-methionine is bound by residues Thr82, Asp103, 131–132 (NA), and Ser148.

The protein belongs to the class I-like SAM-binding methyltransferase superfamily. MenG/UbiE family.

It catalyses the reaction a 2-demethylmenaquinol + S-adenosyl-L-methionine = a menaquinol + S-adenosyl-L-homocysteine + H(+). The catalysed reaction is a 2-methoxy-6-(all-trans-polyprenyl)benzene-1,4-diol + S-adenosyl-L-methionine = a 5-methoxy-2-methyl-3-(all-trans-polyprenyl)benzene-1,4-diol + S-adenosyl-L-homocysteine + H(+). The protein operates within quinol/quinone metabolism; menaquinone biosynthesis; menaquinol from 1,4-dihydroxy-2-naphthoate: step 2/2. It participates in cofactor biosynthesis; ubiquinone biosynthesis. Its function is as follows. Methyltransferase required for the conversion of demethylmenaquinol (DMKH2) to menaquinol (MKH2) and the conversion of 2-polyprenyl-6-methoxy-1,4-benzoquinol (DDMQH2) to 2-polyprenyl-3-methyl-6-methoxy-1,4-benzoquinol (DMQH2). This chain is Ubiquinone/menaquinone biosynthesis C-methyltransferase UbiE, found in Vibrio campbellii (strain ATCC BAA-1116).